An 88-amino-acid chain; its full sequence is Elongation factor 1-beta (88 aa).

This sequence belongs to the EF-1-beta/EF-1-delta family.

Its function is as follows. Promotes the exchange of GDP for GTP in EF-1-alpha/GDP, thus allowing the regeneration of EF-1-alpha/GTP that could then be used to form the ternary complex EF-1-alpha/GTP/AAtRNA. The protein is Elongation factor 1-beta of Haloarcula marismortui (strain ATCC 43049 / DSM 3752 / JCM 8966 / VKM B-1809) (Halobacterium marismortui).